A 413-amino-acid polypeptide reads, in one-letter code: Serine/threonine transporter SstT (413 aa).

A run of 9 helical transmembrane segments spans residues 21 to 41 (IGLL…SALG), 61 to 81 (SVAP…KKVG), 89 to 109 (IIYL…FASF), 146 to 166 (ITAL…GLGI), 189 to 209 (IVHF…ASTL), 224 to 244 (LAVL…IIVF), 305 to 325 (MGGA…TLGI), 337 to 357 (LVAS…LLLI), and 363 to 383 (LFGI…IIGV).

It belongs to the dicarboxylate/amino acid:cation symporter (DAACS) (TC 2.A.23) family.

Its subcellular location is the cell inner membrane. The catalysed reaction is L-serine(in) + Na(+)(in) = L-serine(out) + Na(+)(out). The enzyme catalyses L-threonine(in) + Na(+)(in) = L-threonine(out) + Na(+)(out). Functionally, involved in the import of serine and threonine into the cell, with the concomitant import of sodium (symport system). The chain is Serine/threonine transporter SstT from Mannheimia succiniciproducens (strain KCTC 0769BP / MBEL55E).